The chain runs to 428 residues: MKRSLFKSLYFQVLTAIAIGILLGHFYPELGAQMKPLGDAFVKLIKMIIAPVIFCTVVTGIAGMESMKAVGRTGAVALLYFEIVSTIALIIGLVIVNLVQPGAGMNVDPATLDAKAVAVYAEQAQQQGIVAFLMDVIPSSVIGAFASGNILQVLLFAVLFGFALHRLGRNGQLIFNVIESFSQVIFGIINMIMRLAPIGAFGAMAFTIGKYGVGTLVQLGQLIVCFYITCILFVVVVLGSIARATGFNIFKFIRYIREELLIVLGTSSSESALPRMLDKMEKLGCRKSVVGLVIPTGYSFNLDGTSIYLTMAAVFIAQATNSHMDIFHQITLLVVLLLSSKGAAGVTGSGFIVLAATISAVGHLPVAGLALILGIDRFMSEARALTNLVGNGVATIVVAKWVKELDEKQLNDTLNNKNSAAKTQQISS.

9 consecutive transmembrane segments (helical) span residues 8-28, 44-64, 76-96, 142-162, 184-204, 222-242, 289-309, 326-346, and 352-372; these read SLYF…HFYP, LIKM…IAGM, VALL…LVIV, IGAF…LFGF, VIFG…FGAM, LIVC…GSIA, VVGL…SIYL, IFHQ…AAGV, and IVLA…LALI.

It belongs to the dicarboxylate/amino acid:cation symporter (DAACS) (TC 2.A.23) family.

It localises to the cell inner membrane. Responsible for the transport of dicarboxylates such as succinate, fumarate, and malate from the periplasm across the membrane. This Cronobacter sakazakii (strain ATCC BAA-894) (Enterobacter sakazakii) protein is C4-dicarboxylate transport protein.